The primary structure comprises 596 residues: PDZ and LIM domain protein 5 (596 aa).

N-acetylserine is present on serine 2. The residue at position 2 (serine 2) is a Phosphoserine. Residues 2 to 85 (SNYSVSLVGP…SLNMTLQRAS (84 aa)) enclose the PDZ domain. Position 89 is an N6-acetyllysine; alternate (lysine 89). Lysine 89 bears the N6-succinyllysine; alternate mark. Residue lysine 89 forms a Glycyl lysine isopeptide (Lys-Gly) (interchain with G-Cter in SUMO2); alternate linkage. Serine 111, serine 134, and serine 137 each carry phosphoserine. 3 disordered regions span residues 121-165 (NNMA…SPSP), 196-240 (AGKT…GPPR), and 255-340 (THSD…RPGV). Over residues 134–143 (SVSSPKVTSI) the composition is skewed to polar residues. The span at 144–165 (PSPSSAFTPAHATTSSHASPSP) shows a compositional bias: low complexity. Composition is skewed to polar residues over residues 205-219 (RQPT…TSQE) and 226-237 (RGSQGDSKQQNG). A phosphoserine mark is found at serine 228 and serine 260. Composition is skewed to basic and acidic residues over residues 258–273 (DASK…DWRP) and 293–304 (EHLKESEADNTK). A compositionally biased stretch (polar residues) spans 305–335 (KANNSQEPSPQLASSVASTRSMPESLDSPTS). Residues serine 309, serine 313, and serine 322 each carry the phosphoserine modification. Lysine 350 is modified (N6-acetyllysine). Residues 354-381 (STGVIKSPSWQRPNQGVPSTGRISNSAT) form a disordered region. Serine 360 and serine 362 each carry phosphoserine. Positions 361-381 (PSWQRPNQGVPSTGRISNSAT) are enriched in polar residues. LIM zinc-binding domains follow at residues 418-477 (PMCA…FFAP), 477-536 (PECG…LFGT), and 536-596 (TICH…SVNF).

In terms of assembly, interacts with various PKC isoforms through the LIM domains. Interacts with actin and alpha-actinin through the PDZ domain. Interacts (via LIM domains) with SIPA1L1/SPAR; this interaction may occur preferentially with isoform 1. As to expression, heart and skeletal muscle specific. Expression is commonly increased in the brain of patients with bipolar disorder, schizophrenia, and major depression.

It is found in the postsynaptic density. The protein localises to the presynapse. The protein resides in the postsynapse. Its subcellular location is the cytoplasm. It localises to the cytosol. Its function is as follows. May play an important role in the heart development by scaffolding PKC to the Z-disk region. May play a role in the regulation of cardiomyocyte expansion. Isoforms lacking the LIM domains may negatively modulate the scaffolding activity of isoform 1. Overexpression promotes the development of heart hypertrophy. Contributes to the regulation of dendritic spine morphogenesis in neurons. May be required to restrain postsynaptic growth of excitatory synapses. Isoform 1, but not isoform 2, expression favors spine thinning and elongation. This chain is PDZ and LIM domain protein 5, found in Homo sapiens (Human).